We begin with the raw amino-acid sequence, 67 residues long: MKLRVRQKASNIGQVEHTRKIIKGLGLRGPGSEVVVANTPSFRGMVKKVLHLVEVEEVADGATSSKA.

It belongs to the universal ribosomal protein uL30 family. In terms of assembly, part of the 50S ribosomal subunit.

The protein is Large ribosomal subunit protein uL30 of Sorangium cellulosum (strain So ce56) (Polyangium cellulosum (strain So ce56)).